The sequence spans 461 residues: Ribitol-5-phosphate transferase FKTN (461 aa).

Topologically, residues M1–N7 are cytoplasmic. Residues K6 to Y27 are required and sufficient for interaction with POMGNT1. A helical; Signal-anchor for type II membrane protein membrane pass occupies residues V8–Y28. Residues K29–Y461 are Lumenal-facing. Residue N92 is glycosylated (N-linked (GlcNAc...) asparagine).

The protein belongs to the LicD transferase family. As to quaternary structure, forms a complex composed of FKTN/fukutin, FKRP and RXYLT1/TMEM5. Interacts (via transmembrane domain) with POMGNT1; the interaction is direct and is required for normal POMGNT1 location in Golgi membranes. Expressed in the retina (at protein level). Widely expressed with highest expression in brain, heart, pancreas and skeletal muscle. Expressed at similar levels in control fetal and adult brain. Expressed in migrating neurons, including Cajar-Retzius cells and adult cortical neurons, as well as hippocampal pyramidal cells and cerebellar Purkinje cells. No expression observed in the glia limitans, the subpial astrocytes (which contribute to basement membrane formation) or other glial cells.

The protein resides in the golgi apparatus membrane. Its subcellular location is the cytoplasm. It localises to the nucleus. It carries out the reaction 3-O-[beta-D-GalNAc-(1-&gt;3)-beta-D-GlcNAc-(1-&gt;4)-(O-6-P-alpha-D-Man)]-Thr-[protein] + CDP-L-ribitol = 3-O-[Rib-ol-P-3-beta-D-GalNAc-(1-&gt;3)-beta-D-GlcNAc-(1-&gt;4)-(O-6-P-alpha-D-Man)]-Thr-[protein] + CMP + H(+). The protein operates within protein modification; protein glycosylation. Functionally, catalyzes the transfer of a ribitol-phosphate from CDP-ribitol to the distal N-acetylgalactosamine of the phosphorylated O-mannosyl trisaccharide (N-acetylgalactosamine-beta-3-N-acetylglucosamine-beta-4-(phosphate-6-)mannose), a carbohydrate structure present in alpha-dystroglycan (DAG1). This constitutes the first step in the formation of the ribitol 5-phosphate tandem repeat which links the phosphorylated O-mannosyl trisaccharide to the ligand binding moiety composed of repeats of 3-xylosyl-alpha-1,3-glucuronic acid-beta-1. Required for normal location of POMGNT1 in Golgi membranes, and for normal POMGNT1 activity. May interact with and reinforce a large complex encompassing the outside and inside of muscle membranes. Could be involved in brain development. This chain is Ribitol-5-phosphate transferase FKTN, found in Homo sapiens (Human).